Reading from the N-terminus, the 219-residue chain is Large ribosomal subunit protein uL3 (219 aa).

A disordered region spans residues 133 to 153 (GRASHGNSRSHNVPGSIGMAQ). Gln-153 carries the post-translational modification N5-methylglutamine.

The protein belongs to the universal ribosomal protein uL3 family. As to quaternary structure, part of the 50S ribosomal subunit. Forms a cluster with proteins L14 and L19. Post-translationally, methylated by PrmB.

Functionally, one of the primary rRNA binding proteins, it binds directly near the 3'-end of the 23S rRNA, where it nucleates assembly of the 50S subunit. The chain is Large ribosomal subunit protein uL3 from Burkholderia thailandensis (strain ATCC 700388 / DSM 13276 / CCUG 48851 / CIP 106301 / E264).